The sequence spans 358 residues: Phosphoserine aminotransferase (358 aa).

L-glutamate is bound at residue Arg41. Residues 75-76 (AS), Trp100, Thr148, Asp167, and Gln190 contribute to the pyridoxal 5'-phosphate site. At Lys191 the chain carries N6-(pyridoxal phosphate)lysine. 233–234 (NT) contacts pyridoxal 5'-phosphate.

Belongs to the class-V pyridoxal-phosphate-dependent aminotransferase family. SerC subfamily. In terms of assembly, homodimer. Pyridoxal 5'-phosphate serves as cofactor.

The protein resides in the cytoplasm. It carries out the reaction O-phospho-L-serine + 2-oxoglutarate = 3-phosphooxypyruvate + L-glutamate. The catalysed reaction is 4-(phosphooxy)-L-threonine + 2-oxoglutarate = (R)-3-hydroxy-2-oxo-4-phosphooxybutanoate + L-glutamate. It functions in the pathway amino-acid biosynthesis; L-serine biosynthesis; L-serine from 3-phospho-D-glycerate: step 2/3. It participates in cofactor biosynthesis; pyridoxine 5'-phosphate biosynthesis; pyridoxine 5'-phosphate from D-erythrose 4-phosphate: step 3/5. Catalyzes the reversible conversion of 3-phosphohydroxypyruvate to phosphoserine and of 3-hydroxy-2-oxo-4-phosphonooxybutanoate to phosphohydroxythreonine. The polypeptide is Phosphoserine aminotransferase (Campylobacter jejuni subsp. jejuni serotype O:23/36 (strain 81-176)).